The primary structure comprises 333 residues: G-protein coupled receptor 146 (333 aa).

Topologically, residues 1–21 (MWSCEDLNYTNSGEEQYLCNE) are extracellular. Asn8 carries N-linked (GlcNAc...) asparagine glycosylation. The helical transmembrane segment at 22–42 (FHLFLFIFSVLYLIICFPVGL) threads the bilayer. The Cytoplasmic portion of the chain corresponds to 43–65 (CYNVQLVLVNLYNKATMTMPDVY). Residues 66-86 (FVNMAIAGLIINAVAPVYLFG) traverse the membrane as a helical segment. Topologically, residues 87–102 (PAYTKWSLWSFGNEVY) are extracellular. The helical transmembrane segment at 103–123 (ITLLILFNVSSLVIMYSTTLL) threads the bilayer. At 124–146 (SLDYYIECALPRTYMSSVYNTKH) the chain is on the cytoplasmic side. The helical transmembrane segment at 147 to 167 (VCGFIWGGAVLTSFSSLLFYI) threads the bilayer. Residues 168 to 189 (CNHVSTKIIECSKMQNREAADA) lie on the Extracellular side of the membrane. A helical transmembrane segment spans residues 190–210 (IMVLIGYVVPIIAVIYALVLI). The Cytoplasmic portion of the chain corresponds to 211–234 (LQIRKEATPLDQESGRLDPSVHRL). The helical transmembrane segment at 235–255 (LIATVCTQFILWTPYYVTLLV) threads the bilayer. Residues 256–275 (NTFMDARVKSSNTFYIRIFQ) lie on the Extracellular side of the membrane. Residues 276–296 (FTEGLSNFLAFSSSFVLPLIH) traverse the membrane as a helical segment. Residues 297–333 (RHINKNFSGKLQRLLKRLHCGSQGCTHEHTVVQQVMT) are Cytoplasmic-facing.

It belongs to the G-protein coupled receptor 1 family.

Its subcellular location is the cell membrane. Its function is as follows. G-protein coupled receptor required for the regulation of plasma cholesterol levels. This Xenopus laevis (African clawed frog) protein is G-protein coupled receptor 146 (gpr146).